Reading from the N-terminus, the 1413-residue chain is DNA-directed RNA polymerase subunit beta' (1413 aa).

4 residues coordinate Zn(2+): Cys70, Cys72, Cys85, and Cys88. Residues Asp461, Asp463, and Asp465 each coordinate Mg(2+). Positions 820, 894, 901, and 904 each coordinate Zn(2+).

The protein belongs to the RNA polymerase beta' chain family. The RNAP catalytic core consists of 2 alpha, 1 beta, 1 beta' and 1 omega subunit. When a sigma factor is associated with the core the holoenzyme is formed, which can initiate transcription. Mg(2+) serves as cofactor. Zn(2+) is required as a cofactor.

The enzyme catalyses RNA(n) + a ribonucleoside 5'-triphosphate = RNA(n+1) + diphosphate. Functionally, DNA-dependent RNA polymerase catalyzes the transcription of DNA into RNA using the four ribonucleoside triphosphates as substrates. The sequence is that of DNA-directed RNA polymerase subunit beta' from Cupriavidus metallidurans (strain ATCC 43123 / DSM 2839 / NBRC 102507 / CH34) (Ralstonia metallidurans).